The chain runs to 86 residues: Omega-theraphotoxin-Hhn1f 3 (86 aa).

The signal sequence occupies residues 1–21; sequence MKSIVFVALFGLALLAVACSA. The propeptide occupies 22 to 50; the sequence is SEDAHKELLKEVVRAMVVDKTDAVQAEER. 3 disulfide bridges follow: Cys-52-Cys-66, Cys-59-Cys-71, and Cys-65-Cys-78.

It belongs to the neurotoxin 10 (Hwtx-1) family. 17 (Hntx-9) subfamily. Expressed by the venom gland.

Its subcellular location is the secreted. Its function is as follows. Ion channel inhibitor. The chain is Omega-theraphotoxin-Hhn1f 3 from Cyriopagopus hainanus (Chinese bird spider).